Reading from the N-terminus, the 606-residue chain is Neutral/alkaline invertase 3, chloroplastic (606 aa).

The transit peptide at 1-58 (MGIAEVALHSMPGAFAAHSPASNLPLAADAARGRRRRSANSLHSSRALQGPVRFPGLR) directs the protein to the chloroplast. Residues 97-126 (RVPGQAVGGNGSVNGSAAKPPPQRRKASSV) form a disordered region.

This sequence belongs to the glycosyl hydrolase 100 family.

The protein resides in the plastid. It is found in the chloroplast. It carries out the reaction Hydrolysis of terminal non-reducing beta-D-fructofuranoside residues in beta-D-fructofuranosides.. Mitochondrial invertase that cleaves sucrose into glucose and fructose. This is Neutral/alkaline invertase 3, chloroplastic from Oryza sativa subsp. japonica (Rice).